We begin with the raw amino-acid sequence, 151 residues long: Small ribosomal subunit protein uS15 (151 aa).

Belongs to the universal ribosomal protein uS15 family.

The sequence is that of Small ribosomal subunit protein uS15 (RpS13) from Anopheles gambiae (African malaria mosquito).